The sequence spans 224 residues: tRNA (guanine-N(7)-)-methyltransferase (224 aa).

S-adenosyl-L-methionine contacts are provided by Glu54, Glu79, Glu106, and Asp129. The active site involves Asp129. The substrate site is built by Lys133 and Asp165.

It belongs to the class I-like SAM-binding methyltransferase superfamily. TrmB family.

It carries out the reaction guanosine(46) in tRNA + S-adenosyl-L-methionine = N(7)-methylguanosine(46) in tRNA + S-adenosyl-L-homocysteine. The protein operates within tRNA modification; N(7)-methylguanine-tRNA biosynthesis. Its function is as follows. Catalyzes the formation of N(7)-methylguanine at position 46 (m7G46) in tRNA. The chain is tRNA (guanine-N(7)-)-methyltransferase from Chlamydia abortus (strain DSM 27085 / S26/3) (Chlamydophila abortus).